A 367-amino-acid chain; its full sequence is ELAV-like protein 3 (367 aa).

RRM domains follow at residues 39 to 117, 125 to 205, and 284 to 362; these read TNLI…YARP, ANLY…FANN, and WCIF…FKTS.

This sequence belongs to the RRM elav family. Interacts with MAP1B light chain LC1. As to expression, brain specific. Expressed in the hippocampus with expression in CA1, CA3 and dentate gyrus.

In terms of biological role, RNA-binding protein that binds to AU-rich element (ARE) sequences of target mRNAs, including VEGF mRNA. May also bind poly-A tracts via RRM 3. May be involved in neuronal differentiation and maintenance. Plays a role in the stabilization of GAP43 mRNA and in spatial learning. The chain is ELAV-like protein 3 (Elavl3) from Mus musculus (Mouse).